Consider the following 117-residue polypeptide: UPF0125 protein VV0820 (117 aa).

The disordered stretch occupies residues 90–117; sequence RKRAEQAKESGAADPVTGGKPSPLRKAD.

This sequence belongs to the UPF0125 (RnfH) family.

This is UPF0125 protein VV0820 from Vibrio vulnificus (strain YJ016).